Consider the following 477-residue polypeptide: Adenylyl cyclase-associated protein 2 (477 aa).

At A2 the chain carries N-acetylalanine. 2 disordered regions span residues 224 to 261 (VLSS…PSRS) and 274 to 323 (TKGL…KHAP). Residues 230–246 (GLPPPPPPPPPPGPPPL) show a composition bias toward pro residues. Phosphoserine occurs at positions 301 and 309. Low complexity predominate over residues 301–320 (SPTKSHTPSPTSPKSYPSQK). In terms of domain architecture, C-CAP/cofactor C-like spans 317–455 (PSQKHAPVLE…QDGDYREFPI (139 aa)).

The protein belongs to the CAP family.

Its subcellular location is the cell membrane. Functionally, involved in the regulation of actin polymerization. The sequence is that of Adenylyl cyclase-associated protein 2 (CAP2) from Pongo abelii (Sumatran orangutan).